Consider the following 900-residue polypeptide: MAAGKARVHELAKELGVTSKEVLARLSEQGEFVKSASSTVEAPVARRLRESFGGSKPAPAKGTAKSPGKGPDKSLDKALDAAIDMAAGNGKATAAPAKAADSGGAAIVSPTTPAAPEPPTAVPPSPQAPHPGMAPGARPGPVPKPGIRTPRVGNNPFSSAQPADRPIPRPPAPRPGTARPGVPRPGASPGSMPPRPGGAVGGARPPRPGAPRPGGRPGAPGAGRSDAGGGNYRGGGVGAAPGTGFRGRPGGGGGGRPGQRGGAAGAFGRPGGAPRRGRKSKRQKRQEYDSMQAPVVGGVRLPHGNGETIRLARGASLSDFADKIDANPAALVQALFNLGEMVTATQSVGDETLELLGSEMNYNVQVVSPEDEDRELLESFDLSYGEDEGGEEDLQVRPPVVTVMGHVDHGKTRLLDTIRKANVREAEAGGITQHIGAYQVAVDLDGSQRLITFIDTPGHEAFTAMRARGAKATDIAILVVAADDGVMPQTVEAINHAQAADVPIVVAVNKIDKEGADPAKIRGQLTEYGLVPEEFGGDTMFVDISAKQGTNIEALEEAVLLTADAALDLRANPDMEAQGVAIEAHLDRGRGPVATVLVQRGTLRVGDSVVAGDAYGRVRRMVDEHGEDVEVALPSRPVQVIGFTSVPGAGDNFLVVDEDRIARQIADRRSARKRNALAARSRKRISLEDLDSALKETSQLNLILKGDNAGTVEALEEALMGIQVDDEVVLRVIDRGVGGITETNVNLASASDAVIIGFNVRAEGKATELASREGVEIRYYSVIYQAIDEIEQALRGLLKPIYEENQLGRAEIRALFRSSKVGLIAGCLVTSGVMRRNAKARLLRDNIVVAENLSIASLRREKDDVTEVRDGFECGLTLGYADIKEGDVIESYELVQKERA.

Disordered stretches follow at residues 30-77 (GEFV…SLDK) and 89-291 (NGKA…YDSM). A compositionally biased stretch (low complexity) spans 89–112 (NGKATAAPAKAADSGGAAIVSPTT). Pro residues predominate over residues 113-129 (PAAPEPPTAVPPSPQAP). Positions 175–187 (PGTARPGVPRPGA) are enriched in low complexity. Residues 215–271 (GRPGAPGAGRSDAGGGNYRGGGVGAAPGTGFRGRPGGGGGGRPGQRGGAAGAFGRPG) are compositionally biased toward gly residues. Positions 275–284 (RRGRKSKRQK) are enriched in basic residues. Positions 396 to 567 (VRPPVVTVMG…AVLLTADAAL (172 aa)) constitute a tr-type G domain. The interval 405–412 (GHVDHGKT) is G1. 405–412 (GHVDHGKT) contacts GTP. The segment at 430 to 434 (GITQH) is G2. Residues 455 to 458 (DTPG) are G3. Residues 455–459 (DTPGH) and 509–512 (NKID) contribute to the GTP site. Residues 509 to 512 (NKID) are G4. Residues 545-547 (SAK) form a G5 region.

The protein belongs to the TRAFAC class translation factor GTPase superfamily. Classic translation factor GTPase family. IF-2 subfamily.

The protein localises to the cytoplasm. Its function is as follows. One of the essential components for the initiation of protein synthesis. Protects formylmethionyl-tRNA from spontaneous hydrolysis and promotes its binding to the 30S ribosomal subunits. Also involved in the hydrolysis of GTP during the formation of the 70S ribosomal complex. The sequence is that of Translation initiation factor IF-2 from Mycobacterium bovis (strain BCG / Pasteur 1173P2).